Reading from the N-terminus, the 359-residue chain is Heat-inducible transcription repressor HrcA (359 aa).

Belongs to the HrcA family.

Negative regulator of class I heat shock genes (grpE-dnaK-dnaJ and groELS operons). Prevents heat-shock induction of these operons. This Sinorhizobium medicae (strain WSM419) (Ensifer medicae) protein is Heat-inducible transcription repressor HrcA.